The sequence spans 811 residues: DEAD-box ATP-dependent RNA helicase 48 (811 aa).

2 disordered regions span residues 1–32 (MGGG…ERGL) and 93–138 (DDGP…EPRL). The span at 15-29 (WQHKRMHEKLARHKE) shows a compositional bias: basic residues. Composition is skewed to basic and acidic residues over residues 95 to 104 (GPIHRADRPR) and 117 to 138 (GDRR…EPRL). Positions 286–333 (RNCDMKKERRALKSYEEENNDLAGSFRELREEIKNREVLGAERRRYES) form a coiled coil. The Q motif motif lies at 342–370 (KRFEECGISPLTVKALTDAGYVQTTVVQE). The region spanning 373–556 (LPMCLEGKDV…QLVLKRDHVF (184 aa)) is the Helicase ATP-binding domain. 386–393 (AKTGTGKS) lines the ATP pocket. The DEAD box motif lies at 504–507 (DEAD). The Helicase C-terminal domain occupies 570–740 (KVEQLYLVMP…EMKRKVDGSI (171 aa)).

It belongs to the DEAD box helicase family.

It carries out the reaction ATP + H2O = ADP + phosphate + H(+). In Oryza sativa subsp. japonica (Rice), this protein is DEAD-box ATP-dependent RNA helicase 48.